Here is a 378-residue protein sequence, read N- to C-terminus: METLCQRLDACQEKILDCFENDSKKIEDHIVYWKAVRHENVVLYKARQNNITKLRHQVVPCLQVCKAKACVAIEIQMALESLYKTEYKVEEWTLKDVCENMWHTAPKQCFKKSGKRIEVWFDGKKDNRTEYVVWQWVYYCGDNGWTKVPSVVDYKGIYYVHDGNKVYYTDFNDEAVKYGYKGTWEVHMGNESIYCPDSVSSTLRSNVSPVETVVEYNTYNTYQTPTTSTPVGANEAASSARPGKRPRTTEPDSTDTTRQSAARESHANRVNTNNTNNRQCLGGATCYNTEVDGGYKTTPVVHLKGEPNRLKCLRYRCQKHKHLFVNISSTYHWTNTHTEYSYITVVYKDETQRANFLNVVKIPPSIKIVMGHMTGVDM.

The segment at 1-200 (METLCQRLDA…ESIYCPDSVS (200 aa)) is transactivation domain. Low complexity-rich tracts occupy residues 221-230 (TYQTPTTSTP) and 268-278 (NRVNTNNTNNR). A disordered region spans residues 221 to 281 (TYQTPTTSTP…TNNTNNRQCL (61 aa)). The segment at 297–378 (TTPVVHLKGE…VMGHMTGVDM (82 aa)) is DNA-binding domain. A Glycyl lysine isopeptide (Lys-Gly) (interchain with G-Cter in SUMO) cross-link involves residue K304.

It belongs to the papillomaviridae E2 protein family. In terms of assembly, binds DNA as homodimer. Interacts with protein E1; this interaction greatly increases E1 DNA-binding activity. Interacts with protein L1; this interaction enhances E2-dependent replication and transcription activation. Interacts with protein L2; this interaction inhibits E2 transcriptional activity but not DNA replication function E2. Interacts with protein E7; this interaction inhibits E7 oncogenic activity. Interacts with host TAF1; this interaction modulates E2-dependent transcriptional regulation. Interacts with host BRD4; this interaction mediates E2 transcriptional activation function. Additionally, the interaction with host BRD4 on mitotic chromosomes mediates tethering of the viral genome. Interacts with host TOPBP1; this interaction is required for optimal viral DNA replication. In terms of processing, phosphorylated. Sumoylation plays a regulatory role in E2 transcriptional activity.

The protein localises to the host nucleus. Functionally, plays a role in the initiation of viral DNA replication. A dimer of E2 interacts with a dimer of E1 in order to improve specificity of E1 DNA binding activity. Once the complex recognizes and binds DNA at specific sites, the E2 dimer is removed from DNA. E2 also regulates viral transcription through binding to the E2RE response element (5'-ACCNNNNNNGGT-3') present in multiple copies in the regulatory regions of the viral genome. Activates or represses transcription depending on E2RE's position with regards to proximal promoter elements including the TATA-box. Repression occurs by sterically hindering the assembly of the transcription initiation complex. This Homo sapiens (Human) protein is Regulatory protein E2.